A 180-amino-acid chain; its full sequence is Large ribosomal subunit protein uL22 (180 aa).

The tract at residues 111-180 (VVVESRPAKD…ETSDAKGGSD (70 aa)) is disordered. Positions 142 to 166 (PAKKAPAKKAPAKKAPAKTAAKKTP) are enriched in basic residues. Positions 171–180 (ETSDAKGGSD) are enriched in basic and acidic residues.

It belongs to the universal ribosomal protein uL22 family. In terms of assembly, part of the 50S ribosomal subunit.

Functionally, this protein binds specifically to 23S rRNA; its binding is stimulated by other ribosomal proteins, e.g. L4, L17, and L20. It is important during the early stages of 50S assembly. It makes multiple contacts with different domains of the 23S rRNA in the assembled 50S subunit and ribosome. The globular domain of the protein is located near the polypeptide exit tunnel on the outside of the subunit, while an extended beta-hairpin is found that lines the wall of the exit tunnel in the center of the 70S ribosome. The chain is Large ribosomal subunit protein uL22 from Mycobacterium avium (strain 104).